The sequence spans 446 residues: MSETLTLSDAKSIIENQIEELAKRNKEPEWMTKIRYKALEEFMKAPLNDPVIDEETLLNFIAKPEIEGIPEKVESLDDLPPEMKDLLDRLGINEVEQKYIAGLAVQTDTGVIYNQFLQEWAKKGLIVLPTEEAVRRYPDIMKEHFLKLFKAGESKLTAYHIAIWNGGIFLYVKENLKVPFPLHLFFLIQESSLAQAPHITIIAEKNSEVHLIEGCTAPILVRHSLHLDMTEAYLHENAKVRLTVLQNWPEYVHTRPMTRAKVGRNAEFINTTVSLGAGKSNIANPKYWVGENGYVELNGVILGQKDWYIDLGGEMHLQGEGGRGINASKSVIMDESTVITRGKIVAEAKKTKGHISCDALLLSDKARMETYPGLVSLVDEAELSHEAAIGKIKEEELFYLMSRGLSEEKATQLIVKGFVEPMLKDIPIEFVVEIKKIIELAVSGGF.

The protein belongs to the iron-sulfur cluster assembly SufBD family.

In Pyrococcus horikoshii (strain ATCC 700860 / DSM 12428 / JCM 9974 / NBRC 100139 / OT-3), this protein is Iron-sulfur cluster assembly SufBD family protein PH1385.